Reading from the N-terminus, the 170-residue chain is Lipoprotein signal peptidase (170 aa).

A run of 3 helical transmembrane segments spans residues 9-29, 72-92, and 94-114; these read FNIF…KYLV, IFFL…SLKE, and NCIA…NVID. Catalysis depends on residues Asp124 and Asp146. Residues 143–163 traverse the membrane as a helical segment; it reads NFADSYVVIGMILFLVYDFFI.

It belongs to the peptidase A8 family.

It localises to the cell inner membrane. The enzyme catalyses Release of signal peptides from bacterial membrane prolipoproteins. Hydrolyzes -Xaa-Yaa-Zaa-|-(S,diacylglyceryl)Cys-, in which Xaa is hydrophobic (preferably Leu), and Yaa (Ala or Ser) and Zaa (Gly or Ala) have small, neutral side chains.. It participates in protein modification; lipoprotein biosynthesis (signal peptide cleavage). In terms of biological role, this protein specifically catalyzes the removal of signal peptides from prolipoproteins. The protein is Lipoprotein signal peptidase of Borreliella burgdorferi (strain ATCC 35210 / DSM 4680 / CIP 102532 / B31) (Borrelia burgdorferi).